Reading from the N-terminus, the 211-residue chain is Protein-L-isoaspartate O-methyltransferase (211 aa).

Residue Ser60 is part of the active site.

It belongs to the methyltransferase superfamily. L-isoaspartyl/D-aspartyl protein methyltransferase family.

It localises to the cytoplasm. The catalysed reaction is [protein]-L-isoaspartate + S-adenosyl-L-methionine = [protein]-L-isoaspartate alpha-methyl ester + S-adenosyl-L-homocysteine. Its function is as follows. Catalyzes the methyl esterification of L-isoaspartyl residues in peptides and proteins that result from spontaneous decomposition of normal L-aspartyl and L-asparaginyl residues. It plays a role in the repair and/or degradation of damaged proteins. In Pseudomonas paraeruginosa (strain DSM 24068 / PA7) (Pseudomonas aeruginosa (strain PA7)), this protein is Protein-L-isoaspartate O-methyltransferase.